The sequence spans 641 residues: MPVITLPDGSHRSFAEPVTVHDVAADIGAGLAKAALAGKVNGKLVDTSHLIENDTELAIVTERDEDGVDIIRHSTAHLMAMAVQELFPGAQVTIGPVIENGFYYDFKYERPFTNEDMARIEKRMEELAKQDLPVSRSIMSRDEAIKLFNEMGEEYKVRIIEDIPGEEDLSFYRQGDFIDLCRGPHVPSTGKLKAFKLTKVAGAYWRGDTSNEQLQRIYGTAWGNKKDLKAYLHRLEEAEKRDHRKIGKKLGLFHMQEEAPGMVFWHPDGWSLYQEVEQYMRAQQHKHGYKEIKTPQVVSRTLWEKSGHWDKFKDDMFTTESEKHDYAIKPMNCPCHVQVFNQGLKSYKDLPLRLAEFGSCHRNEASGALHGLMRVRGFTQDDAHIFCEEDAIQEEVSAFIAMLHEIYADFGFSEILYKLSTRPEKRVGSDEVWDKSEAALEQALNREGVDWELLPGEGAFYGPKIEFSLKDCLGRVWQCGTIQVDFSMPGRLGAQYVADNSERKTPVMLHRAVLGSFERFIGILIEEYEGAFPTWLAPTQVAVLNITDKQRDYCQNLAKKLDSSGYRVNADLRNEKIGFKIREHTLNKVPYLVVVGDKEIENNAVAVRTRKGEDLGTMSVDDFEKLLAADVERKGRTKTEI.

One can recognise a TGS domain in the interval 1-61 (MPVITLPDGS…ENDTELAIVT (61 aa)). Residues 242–533 (DHRKIGKKLG…LIEEYEGAFP (292 aa)) are catalytic. Zn(2+) contacts are provided by Cys333, His384, and His510.

This sequence belongs to the class-II aminoacyl-tRNA synthetase family. In terms of assembly, homodimer. It depends on Zn(2+) as a cofactor.

Its subcellular location is the cytoplasm. It carries out the reaction tRNA(Thr) + L-threonine + ATP = L-threonyl-tRNA(Thr) + AMP + diphosphate + H(+). Catalyzes the attachment of threonine to tRNA(Thr) in a two-step reaction: L-threonine is first activated by ATP to form Thr-AMP and then transferred to the acceptor end of tRNA(Thr). Also edits incorrectly charged L-seryl-tRNA(Thr). This Marinobacter nauticus (strain ATCC 700491 / DSM 11845 / VT8) (Marinobacter aquaeolei) protein is Threonine--tRNA ligase.